A 123-amino-acid polypeptide reads, in one-letter code: Protein Wnt-3b (123 aa).

The O-palmitoleoyl serine; by PORCN moiety is linked to residue Ser1. Residues Cys89 and Cys104 are joined by a disulfide bond. Asn90 is a glycosylation site (N-linked (GlcNAc...) asparagine).

The protein belongs to the Wnt family. In terms of processing, palmitoleoylation is required for efficient binding to frizzled receptors. Depalmitoleoylation leads to Wnt signaling pathway inhibition.

The protein localises to the secreted. It is found in the extracellular space. Its subcellular location is the extracellular matrix. Functionally, ligand for members of the frizzled family of seven transmembrane receptors. Probable developmental protein. May be a signaling molecule which affects the development of discrete regions of tissues. Is likely to signal over only few cell diameters. The protein is Protein Wnt-3b (WNT-3B) of Alopias vulpinus (Common thresher shark).